The sequence spans 227 residues: Cytidylate kinase (227 aa).

10–18 (GPASSGKST) serves as a coordination point for ATP.

Belongs to the cytidylate kinase family. Type 1 subfamily.

The protein resides in the cytoplasm. The enzyme catalyses CMP + ATP = CDP + ADP. It catalyses the reaction dCMP + ATP = dCDP + ADP. The chain is Cytidylate kinase from Streptococcus agalactiae serotype III (strain NEM316).